Here is a 207-residue protein sequence, read N- to C-terminus: uncharacterized protein (207 aa).

This is an uncharacterized protein from Haemophilus influenzae (strain ATCC 51907 / DSM 11121 / KW20 / Rd).